Reading from the N-terminus, the 582-residue chain is uncharacterized protein (582 aa).

The next 12 helical transmembrane spans lie at 29–49, 117–137, 155–175, 225–245, 254–274, 287–307, 329–349, 376–396, 432–452, 458–478, 491–511, and 523–543; these read LFIV…FAAL, ISAP…MGLA, VWAT…MIIV, YVYI…YFLL, FISI…YLLI, ATVI…IVLI, YLYL…ALSV, SIFG…WGLI, IVYL…LFNI, LVVS…IALS, IGMA…PVFF, and IYLY…GNWI.

Its subcellular location is the cell membrane. This is an uncharacterized protein from Mycoplasmoides gallisepticum (strain R(low / passage 15 / clone 2)) (Mycoplasma gallisepticum).